Consider the following 540-residue polypeptide: Chaperonin GroEL (540 aa).

ATP contacts are provided by residues 30–33 (TLGP), 87–91 (DGTTT), glycine 415, and aspartate 496.

The protein belongs to the chaperonin (HSP60) family. Forms a cylinder of 14 subunits composed of two heptameric rings stacked back-to-back. Interacts with the co-chaperonin GroES.

Its subcellular location is the cytoplasm. It carries out the reaction ATP + H2O + a folded polypeptide = ADP + phosphate + an unfolded polypeptide.. Functionally, together with its co-chaperonin GroES, plays an essential role in assisting protein folding. The GroEL-GroES system forms a nano-cage that allows encapsulation of the non-native substrate proteins and provides a physical environment optimized to promote and accelerate protein folding. This chain is Chaperonin GroEL, found in Symbiobacterium thermophilum (strain DSM 24528 / JCM 14929 / IAM 14863 / T).